We begin with the raw amino-acid sequence, 482 residues long: Thymidine phosphorylase (482 aa).

The propeptide occupies 1–10 (MAALMTPGTG). Residues 1–36 (MAALMTPGTGAPPAPGDFSGEGSQGLPDPSPEPKQL) are disordered. Phosphothreonine is present on Thr-6. Substrate-binding residues include His-116, Arg-202, Ser-217, and Lys-221. 2 R-V-A-A-A-L-X(5,6)-L-G-R repeats span residues 265–279 (RVAA…PLGR) and 329–342 (RVAA…ALGR). R-A-L-X-X-A-L-V-L repeat units lie at residues 393-401 (RALPLALVL) and 453-461 (RALQEALVL).

The protein belongs to the thymidine/pyrimidine-nucleoside phosphorylase family. In terms of assembly, homodimer.

It carries out the reaction thymidine + phosphate = 2-deoxy-alpha-D-ribose 1-phosphate + thymine. The protein operates within pyrimidine metabolism; dTMP biosynthesis via salvage pathway; dTMP from thymine: step 1/2. In terms of biological role, may have a role in maintaining the integrity of the blood vessels. Has growth promoting activity on endothelial cells, angiogenic activity in vivo and chemotactic activity on endothelial cells in vitro. Functionally, catalyzes the reversible phosphorolysis of thymidine. The produced molecules are then utilized as carbon and energy sources or in the rescue of pyrimidine bases for nucleotide synthesis. The polypeptide is Thymidine phosphorylase (Homo sapiens (Human)).